The following is a 382-amino-acid chain: Anhydro-N-acetylmuramic acid kinase (382 aa).

ATP is bound at residue 9 to 16 (GTSLDGID).

It belongs to the anhydro-N-acetylmuramic acid kinase family.

It carries out the reaction 1,6-anhydro-N-acetyl-beta-muramate + ATP + H2O = N-acetyl-D-muramate 6-phosphate + ADP + H(+). Its pathway is amino-sugar metabolism; 1,6-anhydro-N-acetylmuramate degradation. It participates in cell wall biogenesis; peptidoglycan recycling. Its function is as follows. Catalyzes the specific phosphorylation of 1,6-anhydro-N-acetylmuramic acid (anhMurNAc) with the simultaneous cleavage of the 1,6-anhydro ring, generating MurNAc-6-P. Is required for the utilization of anhMurNAc either imported from the medium or derived from its own cell wall murein, and thus plays a role in cell wall recycling. This chain is Anhydro-N-acetylmuramic acid kinase, found in Bacillus cereus (strain AH820).